The primary structure comprises 914 residues: Serine/threonine kinase SAD-1 (914 aa).

The region spanning 47 to 298 (YKLEKTLGKG…LADVFKHPWV (252 aa)) is the Protein kinase domain. Residues 53–61 (LGKGQTGLV) and lysine 76 contribute to the ATP site. The Proton acceptor role is filled by aspartate 169. 3 disordered regions span residues 375–551 (AQED…SPPS), 563–590 (TMNS…SGPW), and 757–914 (NSTQ…ADKV). Positions 393 to 402 (PPKKRTDSSR) are enriched in basic and acidic residues. Residues 444–462 (RSSTRDLFGSSSSGSYSAR) show a composition bias toward low complexity. Polar residues predominate over residues 473-482 (ASRSTNSYHY). The segment covering 495 to 526 (AARHVRDAQERRESRDSGRGSSRKESKDRSDK) has biased composition (basic and acidic residues). Composition is skewed to low complexity over residues 527–551 (SASS…SPPS) and 563–573 (TMNSTNSSTNS). Positions 574 to 590 (LIAGNSQTSIGSTSGPW) are enriched in polar residues. Over residues 780–796 (DSSVGSACSDSESNASS) the composition is skewed to low complexity. Residues 823-837 (SMRSVGSGTANSYKS) show a composition bias toward polar residues. Over residues 850 to 876 (ASSSSASNRYGPSSSSSGSYSNNADYS) the composition is skewed to low complexity. Polar residues predominate over residues 882–903 (SQRSNGSSAPKNQYSPGSQRSF).

The protein belongs to the protein kinase superfamily. CAMK Ser/Thr protein kinase family. SNF1 subfamily. As to quaternary structure, interacts with strd-1 and nab-1. Mg(2+) serves as cofactor. Expressed in neurons. Colocalizes with strd-1 along the dorsal nerve cord.

It is found in the synapse. It carries out the reaction L-seryl-[protein] + ATP = O-phospho-L-seryl-[protein] + ADP + H(+). The enzyme catalyses L-threonyl-[protein] + ATP = O-phospho-L-threonyl-[protein] + ADP + H(+). Functionally, regulates both neuronal polarity and synaptic organization when bound to strd-1. Kinase activity is required for the establishment, but not the maintenance, of both processes. Binding to nab-1 is essential for role in restricting axonal fate during neuronal polarization but is not required for regulating synapse morphology. The polypeptide is Serine/threonine kinase SAD-1 (Caenorhabditis elegans).